The following is a 212-amino-acid chain: Octanoyltransferase (212 aa).

Residues 30-205 (ETTVDELWCL…ELVEGLGHSQ (176 aa)) form the BPL/LPL catalytic domain. Substrate is bound by residues 69-76 (RGGQVTYH), 136-138 (SLG), and 149-151 (GLA). The active-site Acyl-thioester intermediate is Cys-167.

It belongs to the LipB family.

Its subcellular location is the cytoplasm. The enzyme catalyses octanoyl-[ACP] + L-lysyl-[protein] = N(6)-octanoyl-L-lysyl-[protein] + holo-[ACP] + H(+). The protein operates within protein modification; protein lipoylation via endogenous pathway; protein N(6)-(lipoyl)lysine from octanoyl-[acyl-carrier-protein]: step 1/2. In terms of biological role, catalyzes the transfer of endogenously produced octanoic acid from octanoyl-acyl-carrier-protein onto the lipoyl domains of lipoate-dependent enzymes. Lipoyl-ACP can also act as a substrate although octanoyl-ACP is likely to be the physiological substrate. This Marinobacter nauticus (strain ATCC 700491 / DSM 11845 / VT8) (Marinobacter aquaeolei) protein is Octanoyltransferase.